We begin with the raw amino-acid sequence, 112 residues long: Large ribosomal subunit protein uL22 (112 aa).

It belongs to the universal ribosomal protein uL22 family. Part of the 50S ribosomal subunit.

Its function is as follows. This protein binds specifically to 23S rRNA; its binding is stimulated by other ribosomal proteins, e.g. L4, L17, and L20. It is important during the early stages of 50S assembly. It makes multiple contacts with different domains of the 23S rRNA in the assembled 50S subunit and ribosome. The globular domain of the protein is located near the polypeptide exit tunnel on the outside of the subunit, while an extended beta-hairpin is found that lines the wall of the exit tunnel in the center of the 70S ribosome. The chain is Large ribosomal subunit protein uL22 from Nitratidesulfovibrio vulgaris (strain DSM 19637 / Miyazaki F) (Desulfovibrio vulgaris).